We begin with the raw amino-acid sequence, 150 residues long: Ribonuclease K6 (150 aa).

Positions methionine 1–alanine 23 are cleaved as a signal peptide. The active-site Proton acceptor is histidine 38. Intrachain disulfides connect cysteine 46/cysteine 104, cysteine 60/cysteine 114, cysteine 78/cysteine 129, and cysteine 85/cysteine 92. N-linked (GlcNAc...) asparagine glycosylation is present at asparagine 55. Residues lysine 61–threonine 65 and lysine 86 each bind substrate. A glycan (N-linked (GlcNAc...) asparagine) is linked at asparagine 100. Substrate is bound at residue arginine 105. Residue histidine 145 is the Proton donor of the active site.

Belongs to the pancreatic ribonuclease family. Interacts (via N-terminus) with bacterial lipopolysaccharide (LPS).

The protein resides in the secreted. The protein localises to the lysosome. Its subcellular location is the cytoplasmic granule. Ribonuclease which shows a preference for the pyrimidines uridine and cytosine. Has potent antibacterial activity against a range of Gram-positive and Gram-negative bacteria, including P.aeruginosa, A.baumanii, M.luteus, S.aureus, E.faecalis, E.faecium, S.saprophyticus and E.coli. Causes loss of bacterial membrane integrity, and also promotes agglutination of Gram-negative bacteria. Probably contributes to urinary tract sterility. Bactericidal activity is independent of RNase activity. This chain is Ribonuclease K6 (RNASE6), found in Aotus trivirgatus (Three-striped night monkey).